Reading from the N-terminus, the 227-residue chain is Phosphoglycolate phosphatase (227 aa).

The Nucleophile role is filled by D9. D9, D11, and D171 together coordinate Mg(2+).

It belongs to the HAD-like hydrolase superfamily. CbbY/CbbZ/Gph/YieH family. The cofactor is Mg(2+).

The enzyme catalyses 2-phosphoglycolate + H2O = glycolate + phosphate. Its pathway is organic acid metabolism; glycolate biosynthesis; glycolate from 2-phosphoglycolate: step 1/1. Functionally, specifically catalyzes the dephosphorylation of 2-phosphoglycolate. Is involved in the dissimilation of the intracellular 2-phosphoglycolate formed during the DNA repair of 3'-phosphoglycolate ends, a major class of DNA lesions induced by oxidative stress. This is Phosphoglycolate phosphatase from Mesorhizobium japonicum (strain LMG 29417 / CECT 9101 / MAFF 303099) (Mesorhizobium loti (strain MAFF 303099)).